Reading from the N-terminus, the 381-residue chain is Cytochrome b (381 aa).

4 helical membrane passes run 34 to 54 (FGSL…FLAM), 78 to 99 (WLIR…YLHI), 114 to 134 (WNIG…GYVL), and 179 to 199 (FFAF…IHLL). Heme b is bound by residues His84 and His98. Heme b is bound by residues His183 and His197. Residue His202 coordinates a ubiquinone. The next 4 helical transmembrane spans lie at 227-247 (YKDL…ALFT), 289-309 (LGGV…PLLH), 321-341 (LTQI…WIGG), and 348-368 (FIMV…IIMP).

The protein belongs to the cytochrome b family. As to quaternary structure, the cytochrome bc1 complex contains 3 respiratory subunits (MT-CYB, CYC1 and UQCRFS1), 2 core proteins (UQCRC1 and UQCRC2) and probably 6 low-molecular weight proteins. The cofactor is heme b.

It localises to the mitochondrion inner membrane. Its function is as follows. Component of the ubiquinol-cytochrome c reductase complex (complex III or cytochrome b-c1 complex) that is part of the mitochondrial respiratory chain. The b-c1 complex mediates electron transfer from ubiquinol to cytochrome c. Contributes to the generation of a proton gradient across the mitochondrial membrane that is then used for ATP synthesis. The polypeptide is Cytochrome b (mt-cyb) (Negaprion brevirostris (Lemon shark)).